Consider the following 408-residue polypeptide: Secreted mono- and diacylglycerol lipase 2 (408 aa).

Residues 1 to 24 (MRFKLADSLSLITVQLILATSTLA) form the signal peptide. An N-linked (GlcNAc...) asparagine glycan is attached at Asn-177. Catalysis depends on Ser-217, which acts as the Nucleophile. Residues Asp-283 and His-374 contribute to the active site.

This sequence belongs to the AB hydrolase superfamily. Lipase family. Class 3 subfamily.

The protein localises to the secreted. The enzyme catalyses a monoacylglycerol + H2O = glycerol + a fatty acid + H(+). It catalyses the reaction a diacylglycerol + H2O = a monoacylglycerol + a fatty acid + H(+). In terms of biological role, secreted mono- and diacylglycerol lipase involved in plant virulence. Has a substrate preference for p-nitrophenyl esters with a carbon chain length of C10 (p-nitrophenyl caprate). The chain is Secreted mono- and diacylglycerol lipase 2 from Gibberella zeae (strain ATCC MYA-4620 / CBS 123657 / FGSC 9075 / NRRL 31084 / PH-1) (Wheat head blight fungus).